The sequence spans 349 residues: Fructose-1,6-bisphosphatase class 1 (349 aa).

Glutamate 91, aspartate 110, leucine 112, and aspartate 113 together coordinate Mg(2+). Substrate-binding positions include 113–116 (DGSS) and asparagine 205. Residue glutamate 277 participates in Mg(2+) binding.

Belongs to the FBPase class 1 family. In terms of assembly, homotetramer. Mg(2+) serves as cofactor.

Its subcellular location is the cytoplasm. It catalyses the reaction beta-D-fructose 1,6-bisphosphate + H2O = beta-D-fructose 6-phosphate + phosphate. Its pathway is carbohydrate biosynthesis; gluconeogenesis. In Sinorhizobium medicae (strain WSM419) (Ensifer medicae), this protein is Fructose-1,6-bisphosphatase class 1.